The sequence spans 363 residues: 3-dehydroquinate synthase (363 aa).

NAD(+) is bound by residues 72–77, 130–131, Lys-142, and Lys-151; these read SGEKEK and TT. Residues Glu-184, His-247, and His-264 each coordinate Zn(2+).

It belongs to the sugar phosphate cyclases superfamily. Dehydroquinate synthase family. Requires Co(2+) as cofactor. It depends on Zn(2+) as a cofactor. NAD(+) is required as a cofactor.

It is found in the cytoplasm. It catalyses the reaction 7-phospho-2-dehydro-3-deoxy-D-arabino-heptonate = 3-dehydroquinate + phosphate. The protein operates within metabolic intermediate biosynthesis; chorismate biosynthesis; chorismate from D-erythrose 4-phosphate and phosphoenolpyruvate: step 2/7. Its function is as follows. Catalyzes the conversion of 3-deoxy-D-arabino-heptulosonate 7-phosphate (DAHP) to dehydroquinate (DHQ). In Bacillus thuringiensis (strain Al Hakam), this protein is 3-dehydroquinate synthase.